A 596-amino-acid polypeptide reads, in one-letter code: Nuclear receptor subfamily 2 group C member 2 (596 aa).

A Phosphoserine; by MAPK modification is found at S19. Position 46 is a phosphoserine (S46). Phosphoserine; by MAPK is present on residues S55 and S68. S98 carries the phosphoserine modification. Residues 114 to 189 constitute a DNA-binding region (nuclear receptor); that stretch reads VEYCVVCGDK…MGMKMESVQS (76 aa). NR C4-type zinc fingers lie at residues 117–137 and 153–177; these read CVVC…CEGC and CRSS…LKKC. A Glycyl lysine isopeptide (Lys-Gly) (interchain with G-Cter in SUMO2) cross-link involves residue K192. A Phosphoserine modification is found at S219. K231 bears the N6-acetyllysine mark. The NR LBD domain occupies 341–583; the sequence is GSIHVISRDQ…SIIPYILKME (243 aa).

The protein belongs to the nuclear hormone receptor family. NR2 subfamily. As to quaternary structure, homodimer; can bind DNA as homodimer. Heterodimer; binds DNA as a heterodimer with NR2C1 required for chromatin remodeling and for binding to promoter regions such as globin DR1 repeats. Interacts with NR2C2AP; the interaction represses selective NR2C2-mediated transcriptional activity. Interacts with PCAF; the interaction preferentially occurs on the non-phosphorylated form and induces NR2C2-mediated transactivation activity and does not require the ligand-binding domain. Interacts (MAPK-mediated phosphorylated form) with NRIP1; the interaction promotes repression of NR2C2-mediated activity. Interacts with NLRP10. Interacts (via ligand-binding region) with transcriptional corepressor JAZF1; the interaction promotes NR2C2-mediated transcriptional repression. Phosphorylation on Ser-19 and Ser-68 is an important regulator of NR2C2-mediated transcriptional activity. Phosphorylation on these residues recruits the corepressor, NRIP1, leading to transcripional repression, whereas the non-phosphorylated form preferentially recruits the coactivator, PCAF. Expressed, during embryogenesis, in perichondrium, developing glomeruli structures and tubules of kidney, as well as in intestiinal villi. Also expressed in lung and hair follicles.

Its subcellular location is the nucleus. In terms of biological role, orphan nuclear receptor that can act as a repressor or activator of transcription. An important repressor of nuclear receptor signaling pathways such as retinoic acid receptor, retinoid X, vitamin D3 receptor, thyroid hormone receptor and estrogen receptor pathways. May regulate gene expression during the late phase of spermatogenesis. Activates transcriptional activity of LHCG and is antagonist of PPARA-mediated transactivation. Together with NR2C1, forms the core of the DRED (direct repeat erythroid-definitive) complex that represses embryonic and fetal globin transcription including that of GATA1. Binds to hormone response elements (HREs) consisting of two 5'-AGGTCA-3' half site direct repeat consensus sequences. Plays a fundamental role in early embryonic development and embryonic stem cells. Required for normal spermatogenesis and cerebellum development. Appears to be important for neurodevelopmentally regulated behavior. In Mus musculus (Mouse), this protein is Nuclear receptor subfamily 2 group C member 2 (Nr2c2).